The primary structure comprises 1133 residues: RNA-dependent RNA polymerase 2 (1133 aa).

Residues D830, D832, and D834 each coordinate Mg(2+).

This sequence belongs to the RdRP family. Interacts with NRPD1 and SHH1. Associates with Pol IV complex, forming an interpolymerase channel bridging their active sites, through which the Pol IV-generated transcript is handed over to the RDR2 active site after being backtracked, where it is used as the template for double-stranded RNA (dsRNA) synthesis. Interacts with JMJ24.

Its subcellular location is the nucleus. The protein localises to the nucleoplasm. It localises to the nucleolus. The enzyme catalyses RNA(n) + a ribonucleoside 5'-triphosphate = RNA(n+1) + diphosphate. Functionally, RNA-dependent direct polymerase involved in the production of small interfering RNAs (siRNAs). Binds to single-stranded RNA (ssRNA); engages ssRNAs longer than 7 nucleotides and initiates internal to their 3' ends. Able to transcribe the RNA of an RNA/DNA hybrid, the transcript produced by Pol IV, if its 3' end is accessible, to generate double-stranded small interfering RNAs (dsRNAs) precursor essential for establishing and maintaining DNA methylation. Required for the biogenesis of endogenous siRNAs of 24 nucleotide which derive from heterochromatin and DNA repeats such as transposons or endogenous gene tandem repeats, such as repeats present in FWA gene. Involved in transcriptional gene silencing (TGS). Component of the RNA-directed DNA methylation (RdDM) silencing pathway that utilizes siRNAs to guide DNA methyltransferases to asymmetric cytosines. Involved in control of flowering time through RdDM of FWA locus. Required for reception of long-distance mRNA silencing in the shoot. Required for the formation of telomeric siRNAs and the RNA-dependent DNA methylation of asymmetric cytosines in telomeric (5'-CCCTAAA-3') repeats. The protein is RNA-dependent RNA polymerase 2 of Arabidopsis thaliana (Mouse-ear cress).